A 3354-amino-acid chain; its full sequence is Cadherin-23 (3354 aa).

An N-terminal signal peptide occupies residues 1–23 (MRYSLVTCYAVLWLLMLVPGSWG). At 24–3064 (QVNRLPFFTN…SVQLPDDMSA (3041 aa)) the chain is on the extracellular side. 27 consecutive Cadherin domains span residues 34–132 (HFFD…APTF), 133–236 (HNQP…DPIF), 237–348 (INLP…APEF), 349–460 (NSSE…RPIF), 461–561 (SQPL…VPTF), 562–671 (QKDA…PPTF), 672–784 (SKPA…APYY), 779–890 (KDAP…DPTF), 891–995 (RNLP…TPTF), 996–1102 (FPAV…RPIF), 1103–1208 (LQSS…APVF), 1210–1313 (QQQY…AVQF), 1314–1418 (SNAS…SPRF), 1420–1527 (FTSD…PPVI), 1529–1634 (SPFG…APVF), 1635–1744 (QQPH…VPTF), 1745–1851 (PRDY…DPVL), 1852–1959 (LNLP…HPLF), 1960–2069 (TEGT…WPTF), 2070–2174 (SPPT…RPEF), 2175–2293 (LNPI…TPQF), 2297–2402 (GITY…NPIF), 2403–2509 (DQPS…RPQF), 2510–2611 (SKPQ…RPVF), 2614–2722 (PPNG…EPLF), 2729–2846 (SPQY…PPRF), and 2847–2975 (TKAE…EEEF). Residues Asn155 and Asn206 are each glycosylated (N-linked (GlcNAc...) asparagine). N-linked (GlcNAc...) asparagine glycosylation is found at Asn349, Asn393, Asn434, Asn466, Asn472, Asn602, Asn694, Asn765, Asn810, Asn827, Asn941, Asn1001, Asn1018, Asn1171, Asn1282, Asn1315, Asn1473, Asn1534, Asn1651, Asn1667, Asn1818, Asn1857, Asn1889, Asn1902, Asn2014, Asn2050, Asn2129, Asn2168, Asn2195, Asn2263, Asn2357, and Asn2369. 8 N-linked (GlcNAc...) asparagine glycosylation sites follow: Asn2578, Asn2616, Asn2749, Asn2808, Asn2877, Asn2896, Asn2941, and Asn2981. The helical transmembrane segment at 3065–3085 (LQMAIIVLAILLFLAAMLFVL) threads the bilayer. Topologically, residues 3086 to 3354 (MNWYYRTIHK…MESPLEITEL (269 aa)) are cytoplasmic.

As to quaternary structure, interacts with USH1C and USH1G. antiparallel heterodimer with PCDH15. Isoform C1: Interacts with CAMSAP3; leading to inhibit CAMSAP3 ability to induce microtubule bundle formation. In adult animals relatively high levels of expression are found in testis, skeletal muscle, heart, eye and thymus, and lower expression in kidney, lung and brain. Found in the sensory hair cells of the inner ear.

It is found in the cell membrane. Functionally, cadherins are calcium-dependent cell adhesion proteins. They preferentially interact with themselves in a homophilic manner in connecting cells. CDH23 is required for establishing and/or maintaining the proper organization of the stereocilia bundle of hair cells in the cochlea and the vestibule during late embryonic/early postnatal development. It is part of the functional network formed by USH1C, USH1G, CDH23 and MYO7A that mediates mechanotransduction in cochlear hair cells. Required for normal hearing. In Mus musculus (Mouse), this protein is Cadherin-23 (Cdh23).